Reading from the N-terminus, the 173-residue chain is Co-chaperone protein HscB homolog (173 aa).

The region spanning 3-75 (NPFALFDLPI…ILRADCIIAL (73 aa)) is the J domain.

The protein belongs to the HscB family. In terms of assembly, interacts with HscA and stimulates its ATPase activity.

Its function is as follows. Co-chaperone involved in the maturation of iron-sulfur cluster-containing proteins. Seems to help targeting proteins to be folded toward HscA. This chain is Co-chaperone protein HscB homolog, found in Mannheimia succiniciproducens (strain KCTC 0769BP / MBEL55E).